A 263-amino-acid chain; its full sequence is Glucosamine-6-phosphate deaminase (263 aa).

The active-site Proton acceptor; for enolization step is D72. Catalysis depends on D141, which acts as the For ring-opening step. H143 acts as the Proton acceptor; for ring-opening step in catalysis. The active-site For ring-opening step is E148.

The protein belongs to the glucosamine/galactosamine-6-phosphate isomerase family. NagB subfamily.

The enzyme catalyses alpha-D-glucosamine 6-phosphate + H2O = beta-D-fructose 6-phosphate + NH4(+). It functions in the pathway amino-sugar metabolism; N-acetylneuraminate degradation; D-fructose 6-phosphate from N-acetylneuraminate: step 5/5. Allosterically activated by N-acetylglucosamine 6-phosphate (GlcNAc6P). Catalyzes the reversible isomerization-deamination of glucosamine 6-phosphate (GlcN6P) to form fructose 6-phosphate (Fru6P) and ammonium ion. The polypeptide is Glucosamine-6-phosphate deaminase (Phocaeicola vulgatus (strain ATCC 8482 / DSM 1447 / JCM 5826 / CCUG 4940 / NBRC 14291 / NCTC 11154) (Bacteroides vulgatus)).